The sequence spans 88 residues: Kunitz-type U15-theraphotoxin-Hhn1i (88 aa).

The signal sequence occupies residues 1–27 (MGTARFLRAVLLLSVLLMVTFPALLSA). Positions 28-33 (EHHDGR) are excised as a propeptide. A BPTI/Kunitz inhibitor domain is found at 37-85 (CRLPSDSGDCLRFFEMRYFDGTTCTKFVYGGYGGNDNRFPTEKACMKRC). 2 disulfides stabilise this stretch: Cys37–Cys85 and Cys60–Cys81.

Belongs to the venom Kunitz-type family. 03 (sub-Kunitz) subfamily. As to expression, expressed by the venom gland.

It localises to the secreted. In terms of biological role, serine protease inhibitor that inhibits trypsin at a molar ratio of 1:1. The polypeptide is Kunitz-type U15-theraphotoxin-Hhn1i (Cyriopagopus hainanus (Chinese bird spider)).